The primary structure comprises 487 residues: CUGBP Elav-like family member 1 (487 aa).

Methionine 1 is subject to N-acetylmethionine. Threonine 4 bears the Phosphothreonine mark. RRM domains lie at 16–99 and 108–188; these read IKMF…PADS and RKLF…FADT. Residue lysine 109 forms a Glycyl lysine isopeptide (Lys-Gly) (interchain with G-Cter in SUMO2) linkage. 2 positions are modified to phosphoserine: serine 179 and serine 303. The disordered stretch occupies residues 277-310; that stretch reads TPSGTNALTTSSSPLSVLTSSAGSSPSSSSSNSV. Residues 283–310 show a composition bias toward low complexity; the sequence is ALTTSSSPLSVLTSSAGSSPSSSSSNSV. Positions 402–480 constitute an RRM 3 domain; sequence ANLFIYHLPQ…KRLKVQLKRS (79 aa).

This sequence belongs to the CELF/BRUNOL family. Interacts with HNRNPH1; the interaction in RNA-dependent. Interacts with PARN. Component of an EIF2 complex at least composed of CELF1/CUGBP1, CALR, CALR3, EIF2S1, EIF2S2, HSP90B1 and HSPA5. Associates with polysomes.

Its subcellular location is the nucleus. It is found in the cytoplasm. RNA-binding protein implicated in the regulation of several post-transcriptional events. Involved in pre-mRNA alternative splicing, mRNA translation and stability. Mediates exon inclusion and/or exclusion in pre-mRNA that are subject to tissue-specific and developmentally regulated alternative splicing. Specifically activates exon 5 inclusion of cardiac isoforms of TNNT2 during heart remodeling at the juvenile to adult transition. Acts both as an activator and as a repressor of a pair of coregulated exons: promotes inclusion of the smooth muscle (SM) exon but exclusion of the non-muscle (NM) exon in actinin pre-mRNAs. Activates SM exon 5 inclusion by antagonizing the repressive effect of PTB. Promotes exclusion of exon 11 of the INSR pre-mRNA. Inhibits, together with HNRNPH1, insulin receptor (IR) pre-mRNA exon 11 inclusion in myoblast. Increases translation and controls the choice of translation initiation codon of CEBPB mRNA. Increases mRNA translation of CEBPB in aging liver. Increases translation of CDKN1A mRNA by antagonizing the repressive effect of CALR3. Mediates rapid cytoplasmic mRNA deadenylation. Recruits the deadenylase PARN to the poly(A) tail of EDEN-containing mRNAs to promote their deadenylation. Required for completion of spermatogenesis. Binds to (CUG)n triplet repeats in the 3'-UTR of transcripts such as DMPK and to Bruno response elements (BREs). Binds to muscle-specific splicing enhancer (MSE) intronic sites flanking the alternative exon 5 of TNNT2 pre-mRNA. Binds to AU-rich sequences (AREs or EDEN-like) localized in the 3'-UTR of JUN and FOS mRNAs. Binds to the IR RNA. Binds to the 5'-region of CDKN1A and CEBPB mRNAs. Binds with the 5'-region of CEBPB mRNA in aging liver. May be a specific regulator of miRNA biogenesis. Binds to primary microRNA pri-MIR140 and, with CELF2, negatively regulates the processing to mature miRNA. This chain is CUGBP Elav-like family member 1 (Celf1), found in Rattus norvegicus (Rat).